Consider the following 394-residue polypeptide: Nuclear hormone receptor family member nhr-18 (394 aa).

A DNA-binding region (nuclear receptor) is located at residues 8–83 (SGSCEVCGDK…VGMDTRRFQT (76 aa)). 2 consecutive NR C4-type zinc fingers follow at residues 11–31 (CEVC…CRAC) and 48–71 (CPNG…LKKC). Residues 134-394 (MLQKPTNHVL…FSHPEMFEAT (261 aa)) enclose the NR LBD domain.

This sequence belongs to the nuclear hormone receptor family.

Its subcellular location is the nucleus. Functionally, orphan nuclear receptor. The chain is Nuclear hormone receptor family member nhr-18 (nhr-18) from Caenorhabditis elegans.